Here is a 477-residue protein sequence, read N- to C-terminus: Aspartyl/glutamyl-tRNA(Asn/Gln) amidotransferase subunit B (477 aa).

Belongs to the GatB/GatE family. GatB subfamily. As to quaternary structure, heterotrimer of A, B and C subunits.

It carries out the reaction L-glutamyl-tRNA(Gln) + L-glutamine + ATP + H2O = L-glutaminyl-tRNA(Gln) + L-glutamate + ADP + phosphate + H(+). It catalyses the reaction L-aspartyl-tRNA(Asn) + L-glutamine + ATP + H2O = L-asparaginyl-tRNA(Asn) + L-glutamate + ADP + phosphate + 2 H(+). Functionally, allows the formation of correctly charged Asn-tRNA(Asn) or Gln-tRNA(Gln) through the transamidation of misacylated Asp-tRNA(Asn) or Glu-tRNA(Gln) in organisms which lack either or both of asparaginyl-tRNA or glutaminyl-tRNA synthetases. The reaction takes place in the presence of glutamine and ATP through an activated phospho-Asp-tRNA(Asn) or phospho-Glu-tRNA(Gln). This is Aspartyl/glutamyl-tRNA(Asn/Gln) amidotransferase subunit B from Streptococcus sanguinis (strain SK36).